The following is a 385-amino-acid chain: GDSL esterase/lipase 5 (385 aa).

A signal peptide spans 1–35 (MRESTLMEKVTRRTISSFIFFIVSSTILFLAGKSS). Asn-45 is a glycosylation site (N-linked (GlcNAc...) asparagine). The active-site Nucleophile is the Ser-55. 4 N-linked (GlcNAc...) asparagine glycosylation sites follow: Asn-66, Asn-194, Asn-211, and Asn-289. Active-site residues include Asp-345 and His-348.

Belongs to the 'GDSL' lipolytic enzyme family.

The protein localises to the secreted. The sequence is that of GDSL esterase/lipase 5 (GLIP5) from Arabidopsis thaliana (Mouse-ear cress).